Here is a 309-residue protein sequence, read N- to C-terminus: Porphobilinogen deaminase (309 aa).

Cysteine 242 is modified (S-(dipyrrolylmethanemethyl)cysteine).

This sequence belongs to the HMBS family. As to quaternary structure, monomer. Requires dipyrromethane as cofactor.

It catalyses the reaction 4 porphobilinogen + H2O = hydroxymethylbilane + 4 NH4(+). Its pathway is porphyrin-containing compound metabolism; protoporphyrin-IX biosynthesis; coproporphyrinogen-III from 5-aminolevulinate: step 2/4. Its function is as follows. Tetrapolymerization of the monopyrrole PBG into the hydroxymethylbilane pre-uroporphyrinogen in several discrete steps. This Shewanella sediminis (strain HAW-EB3) protein is Porphobilinogen deaminase.